Consider the following 238-residue polypeptide: tRNA (guanine-N(7)-)-methyltransferase (238 aa).

Glu68, Glu93, Asp120, and Asp143 together coordinate S-adenosyl-L-methionine. Residue Asp143 is part of the active site. Residues Lys147, Asp179, and 216–219 (TKFE) each bind substrate.

Belongs to the class I-like SAM-binding methyltransferase superfamily. TrmB family.

The catalysed reaction is guanosine(46) in tRNA + S-adenosyl-L-methionine = N(7)-methylguanosine(46) in tRNA + S-adenosyl-L-homocysteine. Its pathway is tRNA modification; N(7)-methylguanine-tRNA biosynthesis. Its function is as follows. Catalyzes the formation of N(7)-methylguanine at position 46 (m7G46) in tRNA. The chain is tRNA (guanine-N(7)-)-methyltransferase from Shewanella baltica (strain OS155 / ATCC BAA-1091).